Reading from the N-terminus, the 177-residue chain is Inorganic pyrophosphatase (177 aa).

3 residues coordinate substrate: Lys-30, Arg-44, and Tyr-56. The Mg(2+) site is built by Asp-66, Asp-71, and Asp-103. Tyr-142 is a substrate binding site.

This sequence belongs to the PPase family. As to quaternary structure, homohexamer. Mg(2+) is required as a cofactor.

The protein localises to the cytoplasm. The catalysed reaction is diphosphate + H2O = 2 phosphate + H(+). Its function is as follows. Catalyzes the hydrolysis of inorganic pyrophosphate (PPi) forming two phosphate ions. In Agrobacterium fabrum (strain C58 / ATCC 33970) (Agrobacterium tumefaciens (strain C58)), this protein is Inorganic pyrophosphatase.